The chain runs to 369 residues: 3-dehydroquinate synthase (369 aa).

NAD(+)-binding positions include 75–80, 109–113, 133–134, lysine 146, lysine 155, and 173–176; these read DGEEHK, GVIGD, TT, and TLKT. Zn(2+) is bound by residues glutamate 188, histidine 251, and histidine 268.

The protein belongs to the sugar phosphate cyclases superfamily. Dehydroquinate synthase family. Co(2+) is required as a cofactor. It depends on Zn(2+) as a cofactor. The cofactor is NAD(+).

It is found in the cytoplasm. It carries out the reaction 7-phospho-2-dehydro-3-deoxy-D-arabino-heptonate = 3-dehydroquinate + phosphate. It participates in metabolic intermediate biosynthesis; chorismate biosynthesis; chorismate from D-erythrose 4-phosphate and phosphoenolpyruvate: step 2/7. In terms of biological role, catalyzes the conversion of 3-deoxy-D-arabino-heptulosonate 7-phosphate (DAHP) to dehydroquinate (DHQ). The polypeptide is 3-dehydroquinate synthase (Legionella pneumophila (strain Paris)).